The following is a 169-amino-acid chain: Cytochrome c oxidase subunit 4 isoform 1, mitochondrial (169 aa).

Residues Met1–Arg22 constitute a mitochondrion transit peptide. The Mitochondrial matrix segment spans residues Ala23–Asn98. Lys29 bears the N6-acetyllysine; alternate mark. At Lys29 the chain carries N6-succinyllysine; alternate. Lys53 carries the N6-acetyllysine modification. 2 positions are modified to phosphoserine: Ser56 and Ser58. Position 60 is an N6-acetyllysine; alternate (Lys60). The residue at position 60 (Lys60) is an N6-succinyllysine; alternate. Lys67 is modified (N6-acetyllysine). The chain crosses the membrane as a helical span at residues Glu99–Tyr124. At Val125–Lys169 the chain is on the mitochondrial intermembrane side.

The protein belongs to the cytochrome c oxidase IV family. Component of the cytochrome c oxidase (complex IV, CIV), a multisubunit enzyme composed of 14 subunits. The complex is composed of a catalytic core of 3 subunits MT-CO1, MT-CO2 and MT-CO3, encoded in the mitochondrial DNA, and 11 supernumerary subunits COX4I1 (or COX4I2), COX5A, COX5B, COX6A1 (or COX6A2), COX6B1 (or COX6B2), COX6C, COX7A2 (or COX7A1), COX7B, COX7C, COX8A and NDUFA4, which are encoded in the nuclear genome. The complex exists as a monomer or a dimer and forms supercomplexes (SCs) in the inner mitochondrial membrane with NADH-ubiquinone oxidoreductase (complex I, CI) and ubiquinol-cytochrome c oxidoreductase (cytochrome b-c1 complex, complex III, CIII), resulting in different assemblies (supercomplex SCI(1)III(2)IV(1) and megacomplex MCI(2)III(2)IV(2)). Interacts with AFG1L. Interacts with PHB2; the interaction decreases in absence of SPHK2. Interacts with ABCB7; this interaction allows the regulation of cellular iron homeostasis and cellular reactive oxygen species (ROS) levels in cardiomyocytes. Interacts with FLVCR2; this interaction occurs in the absence of heme and is disrupted upon heme binding. Interacts with IRGC. As to expression, ubiquitous.

It localises to the mitochondrion inner membrane. It participates in energy metabolism; oxidative phosphorylation. Its function is as follows. Component of the cytochrome c oxidase, the last enzyme in the mitochondrial electron transport chain which drives oxidative phosphorylation. The respiratory chain contains 3 multisubunit complexes succinate dehydrogenase (complex II, CII), ubiquinol-cytochrome c oxidoreductase (cytochrome b-c1 complex, complex III, CIII) and cytochrome c oxidase (complex IV, CIV), that cooperate to transfer electrons derived from NADH and succinate to molecular oxygen, creating an electrochemical gradient over the inner membrane that drives transmembrane transport and the ATP synthase. Cytochrome c oxidase is the component of the respiratory chain that catalyzes the reduction of oxygen to water. Electrons originating from reduced cytochrome c in the intermembrane space (IMS) are transferred via the dinuclear copper A center (CU(A)) of subunit 2 and heme A of subunit 1 to the active site in subunit 1, a binuclear center (BNC) formed by heme A3 and copper B (CU(B)). The BNC reduces molecular oxygen to 2 water molecules using 4 electrons from cytochrome c in the IMS and 4 protons from the mitochondrial matrix. The sequence is that of Cytochrome c oxidase subunit 4 isoform 1, mitochondrial from Homo sapiens (Human).